A 367-amino-acid polypeptide reads, in one-letter code: tRNA/tmRNA (uracil-C(5))-methyltransferase (367 aa).

S-adenosyl-L-methionine-binding residues include Gln190, Tyr218, Asn223, Glu239, and Asp299. Residue Cys324 is the Nucleophile of the active site. Catalysis depends on Glu358, which acts as the Proton acceptor.

This sequence belongs to the class I-like SAM-binding methyltransferase superfamily. RNA M5U methyltransferase family. TrmA subfamily.

It carries out the reaction uridine(54) in tRNA + S-adenosyl-L-methionine = 5-methyluridine(54) in tRNA + S-adenosyl-L-homocysteine + H(+). It catalyses the reaction uridine(341) in tmRNA + S-adenosyl-L-methionine = 5-methyluridine(341) in tmRNA + S-adenosyl-L-homocysteine + H(+). In terms of biological role, dual-specificity methyltransferase that catalyzes the formation of 5-methyluridine at position 54 (m5U54) in all tRNAs, and that of position 341 (m5U341) in tmRNA (transfer-mRNA). The polypeptide is tRNA/tmRNA (uracil-C(5))-methyltransferase (Yersinia enterocolitica serotype O:8 / biotype 1B (strain NCTC 13174 / 8081)).